Reading from the N-terminus, the 366-residue chain is Peptide chain release factor 2 (366 aa).

N5-methylglutamine is present on Gln253.

This sequence belongs to the prokaryotic/mitochondrial release factor family. Post-translationally, methylated by PrmC. Methylation increases the termination efficiency of RF2.

It is found in the cytoplasm. Its function is as follows. Peptide chain release factor 2 directs the termination of translation in response to the peptide chain termination codons UGA and UAA. The sequence is that of Peptide chain release factor 2 from Yersinia pestis.